Reading from the N-terminus, the 375-residue chain is Sulfite efflux pump SSU1 (375 aa).

Over Met1–Ala25 the chain is Cytoplasmic. The helical transmembrane segment at Ile26–Leu46 threads the bilayer. Topologically, residues Leu47–Tyr59 are extracellular. The chain crosses the membrane as a helical span at residues Ile60–Ile80. The Cytoplasmic segment spans residues Thr81–Met101. A helical transmembrane segment spans residues Leu102–Val122. Residues Pro123–Gly135 lie on the Extracellular side of the membrane. Residues Leu136–Met156 traverse the membrane as a helical segment. At Thr157–Thr167 the chain is on the cytoplasmic side. The chain crosses the membrane as a helical span at residues Ala168–Ala188. The Extracellular segment spans residues Asp189 to Thr200. Residue Asn193 is glycosylated (N-linked (GlcNAc...) asparagine). A helical transmembrane segment spans residues Ile201–Ile221. At Tyr222 to Arg234 the chain is on the cytoplasmic side. A helical transmembrane segment spans residues Ala235–Met255. Topologically, residues Gln256–Asp277 are extracellular. The chain crosses the membrane as a helical span at residues Ile278–Leu298. The Cytoplasmic segment spans residues Trp299 to Lys309. A helical transmembrane segment spans residues Phe310–Thr330. Residues Thr331–Asp343 lie on the Extracellular side of the membrane. A helical membrane pass occupies residues Ile344–Thr364. Over Val365–Arg375 the chain is Cytoplasmic.

The protein belongs to the tellurite-resistance/dicarboxylate transporter (TDT) family.

Its subcellular location is the cell membrane. In terms of biological role, sulphite efflux pump required for the secretion of sulphite as a reducing agent. In the presence of sulphite, cystine in keratin is directly cleaved to cysteine and S-sulphocysteine, and thereby, reduced proteins become accessible to hydrolysis by a variety of secreted endo- and exoproteases. Excretion of sulphite mediated by an efflux pump also represents a detoxification pathway for dermatophytes during infection of the epidermal stratum corneum, hair and nails, which are rich in cysteine. The chain is Sulfite efflux pump SSU1 from Arthroderma benhamiae (strain ATCC MYA-4681 / CBS 112371) (Trichophyton mentagrophytes).